We begin with the raw amino-acid sequence, 224 residues long: uncharacterized protein (224 aa).

This is an uncharacterized protein from Mycobacterium tuberculosis (strain CDC 1551 / Oshkosh).